A 241-amino-acid polypeptide reads, in one-letter code: Demethylmenaquinone methyltransferase (241 aa).

S-adenosyl-L-methionine contacts are provided by residues threonine 68, aspartate 88, and 114 to 115 (DA).

It belongs to the class I-like SAM-binding methyltransferase superfamily. MenG/UbiE family.

It carries out the reaction a 2-demethylmenaquinol + S-adenosyl-L-methionine = a menaquinol + S-adenosyl-L-homocysteine + H(+). It participates in quinol/quinone metabolism; menaquinone biosynthesis; menaquinol from 1,4-dihydroxy-2-naphthoate: step 2/2. In terms of biological role, methyltransferase required for the conversion of demethylmenaquinol (DMKH2) to menaquinol (MKH2). The protein is Demethylmenaquinone methyltransferase of Deinococcus radiodurans (strain ATCC 13939 / DSM 20539 / JCM 16871 / CCUG 27074 / LMG 4051 / NBRC 15346 / NCIMB 9279 / VKM B-1422 / R1).